We begin with the raw amino-acid sequence, 428 residues long: Gamma-glutamyl phosphate reductase (428 aa).

This sequence belongs to the gamma-glutamyl phosphate reductase family.

The protein localises to the cytoplasm. The catalysed reaction is L-glutamate 5-semialdehyde + phosphate + NADP(+) = L-glutamyl 5-phosphate + NADPH + H(+). It participates in amino-acid biosynthesis; L-proline biosynthesis; L-glutamate 5-semialdehyde from L-glutamate: step 2/2. Its function is as follows. Catalyzes the NADPH-dependent reduction of L-glutamate 5-phosphate into L-glutamate 5-semialdehyde and phosphate. The product spontaneously undergoes cyclization to form 1-pyrroline-5-carboxylate. The polypeptide is Gamma-glutamyl phosphate reductase (Mesorhizobium japonicum (strain LMG 29417 / CECT 9101 / MAFF 303099) (Mesorhizobium loti (strain MAFF 303099))).